The chain runs to 103 residues: Toluene-4-monooxygenase system, effector component (103 aa).

This sequence belongs to the TmoD/XamoD family. In terms of assembly, the alkene monooxygenase multicomponent enzyme system is composed of an electron transfer component and a monooxygenase component interacting with the effector protein TmoD. The electron transfer component is composed of a ferredoxin reductase (TmoF) and a ferredoxin (TmoC), and the monooxygenase component is formed by a heterohexamer (dimer of heterotrimers) of two alpha subunits (TmoA), two beta subunits (TmoE) and two gamma subunits (TmoB).

Its pathway is xenobiotic degradation; toluene degradation. Effector component of the toluene-4-monooxygenase multicomponent enzyme system which catalyzes the O2- and NADH-dependent hydroxylation of toluene to form p-cresol. Required for optimal efficiency and specificity of the holoenzyme. This Ectopseudomonas mendocina (Pseudomonas mendocina) protein is Toluene-4-monooxygenase system, effector component.